The chain runs to 246 residues: tRNA (guanine-N(7)-)-methyltransferase (246 aa).

Residues 1-26 (MSDSSSSSENAPATPESPGRPPRGIK) form a disordered region. Glutamate 74, glutamate 99, aspartate 126, and aspartate 149 together coordinate S-adenosyl-L-methionine. Aspartate 149 is an active-site residue. Residues lysine 153, aspartate 185, and 224 to 227 (TKFE) contribute to the substrate site.

It belongs to the class I-like SAM-binding methyltransferase superfamily. TrmB family.

It catalyses the reaction guanosine(46) in tRNA + S-adenosyl-L-methionine = N(7)-methylguanosine(46) in tRNA + S-adenosyl-L-homocysteine. Its pathway is tRNA modification; N(7)-methylguanine-tRNA biosynthesis. Functionally, catalyzes the formation of N(7)-methylguanine at position 46 (m7G46) in tRNA. The protein is tRNA (guanine-N(7)-)-methyltransferase of Chromohalobacter salexigens (strain ATCC BAA-138 / DSM 3043 / CIP 106854 / NCIMB 13768 / 1H11).